The chain runs to 350 residues: Galactokinase (350 aa).

Residue 15–18 coordinates substrate; the sequence is EHTD. ATP is bound by residues Ser-47 and 99-105; that span reads GAGLSSS. Mg(2+)-binding residues include Ser-105 and Glu-137. Asp-149 functions as the Proton acceptor in the catalytic mechanism. Residue Tyr-198 coordinates substrate.

The protein belongs to the GHMP kinase family. GalK subfamily.

It localises to the cytoplasm. The enzyme catalyses alpha-D-galactose + ATP = alpha-D-galactose 1-phosphate + ADP + H(+). It functions in the pathway carbohydrate metabolism; galactose metabolism. In terms of biological role, catalyzes the transfer of the gamma-phosphate of ATP to D-galactose to form alpha-D-galactose-1-phosphate (Gal-1-P). In Pyrococcus horikoshii (strain ATCC 700860 / DSM 12428 / JCM 9974 / NBRC 100139 / OT-3), this protein is Galactokinase.